The sequence spans 423 residues: Gamma-glutamyl phosphate reductase (423 aa).

Belongs to the gamma-glutamyl phosphate reductase family.

It is found in the cytoplasm. It catalyses the reaction L-glutamate 5-semialdehyde + phosphate + NADP(+) = L-glutamyl 5-phosphate + NADPH + H(+). It participates in amino-acid biosynthesis; L-proline biosynthesis; L-glutamate 5-semialdehyde from L-glutamate: step 2/2. Functionally, catalyzes the NADPH-dependent reduction of L-glutamate 5-phosphate into L-glutamate 5-semialdehyde and phosphate. The product spontaneously undergoes cyclization to form 1-pyrroline-5-carboxylate. The polypeptide is Gamma-glutamyl phosphate reductase (Pseudomonas putida (strain ATCC 700007 / DSM 6899 / JCM 31910 / BCRC 17059 / LMG 24140 / F1)).